Reading from the N-terminus, the 61-residue chain is Sec-independent protein translocase protein TatA (61 aa).

Residues 1-21 (MFSNIGFPGLILILVAVLILF) form a helical membrane-spanning segment.

The protein belongs to the TatA/E family. Forms a complex with TatC.

The protein resides in the cell membrane. Part of the twin-arginine translocation (Tat) system that transports large folded proteins containing a characteristic twin-arginine motif in their signal peptide across membranes. TatA could form the protein-conducting channel of the Tat system. This is Sec-independent protein translocase protein TatA from Bacillus anthracis (strain A0248).